A 538-amino-acid chain; its full sequence is Metal transporter Nramp5 (538 aa).

Transmembrane regions (helical) follow at residues 44 to 64 (FLAH…PGNL), 77 to 97 (ELLW…SLAA), 118 to 138 (FVKI…DIPE), 140 to 160 (IGTA…GVLI), 181 to 201 (FLIS…LSIV), 227 to 247 (IALL…ALVL), 264 to 284 (FFLY…IAVV), 324 to 346 (SAIV…GTYA), 365 to 385 (NLMT…IGGS), 391 to 411 (LIII…IPLL), 427 to 447 (IYII…NMYF), and 467 to 487 (VLVG…VVYL). A disordered region spans residues 518-538 (AVDDDEPLPYRDDLADIPLPR).

Belongs to the NRAMP (TC 2.A.55) family.

It is found in the membrane. Functionally, probable metal transporter. The protein is Metal transporter Nramp5 (NRAMP5) of Oryza sativa subsp. japonica (Rice).